A 247-amino-acid chain; its full sequence is Chloride intracellular channel protein 2 (247 aa).

The interval 1–94 (MSGLRPGTQV…KIEEFLEQTL (94 aa)) is N-terminal. The segment at 1 to 96 (MSGLRPGTQV…EEFLEQTLAP (96 aa)) is required for insertion into the membrane. Glutamate 25 contacts glutathione. Positions 30-33 (CPFC) match the G-site motif. Cysteine 30 and cysteine 33 are disulfide-bonded. Residues 32–52 (FCQRLFMILWLKGVKFNVTTV) traverse the membrane as a helical segment. In terms of domain architecture, GST C-terminal spans 76–239 (NKELKTDFIK…PEDKEIENTY (164 aa)). The segment at 95–106 (APPRYPHLSPKY) is joint loop. Positions 107 to 247 (KESFDVGCNL…TYANVAKQKS (141 aa)) are C-terminal. Residues 151–171 (NTPLLDEIDPDSAEEPPVSRR) form a foot loop region. Histidine 227 lines the glutathione pocket.

It belongs to the chloride channel CLIC family. In terms of assembly, monomer. Interacts with TRAPPC2 and RYR2. In terms of tissue distribution, expressed in adult and fetal brain, heart, skeletal muscle, liver, lung, and spleen. Detected in adult stomach and testis. Expressed in fetal thymus and kidney.

The protein resides in the cytoplasm. Its subcellular location is the membrane. It catalyses the reaction chloride(in) = chloride(out). It carries out the reaction tert-butyl hydroperoxide + 2 glutathione = tert-butanol + glutathione disulfide + H2O. The enzyme catalyses cumene hydroperoxide + 2 glutathione = 2-phenylpropan-2-ol + glutathione disulfide + H2O. The channel conductance is regulated by pH. Its function is as follows. In the soluble state, catalyzes glutaredoxin-like thiol disulfide exchange reactions with reduced glutathione as electron donor. Displays weak glutathione peroxidase activity. Can insert into membranes and form chloride ion channels. Membrane insertion seems to be redox-regulated and may occur only under oxidizing conditions. Modulates the activity of RYR2 and inhibits calcium influx. In Homo sapiens (Human), this protein is Chloride intracellular channel protein 2.